We begin with the raw amino-acid sequence, 432 residues long: Enolase (432 aa).

Residue Gln167 participates in (2R)-2-phosphoglycerate binding. Catalysis depends on Glu209, which acts as the Proton donor. The Mg(2+) site is built by Asp246, Glu289, and Asp316. 4 residues coordinate (2R)-2-phosphoglycerate: Lys341, Arg370, Ser371, and Lys392. The active-site Proton acceptor is the Lys341.

This sequence belongs to the enolase family. Mg(2+) is required as a cofactor.

Its subcellular location is the cytoplasm. The protein resides in the secreted. The protein localises to the cell surface. It carries out the reaction (2R)-2-phosphoglycerate = phosphoenolpyruvate + H2O. The protein operates within carbohydrate degradation; glycolysis; pyruvate from D-glyceraldehyde 3-phosphate: step 4/5. Its function is as follows. Catalyzes the reversible conversion of 2-phosphoglycerate (2-PG) into phosphoenolpyruvate (PEP). It is essential for the degradation of carbohydrates via glycolysis. The protein is Enolase of Petrotoga mobilis (strain DSM 10674 / SJ95).